Here is a 54-residue protein sequence, read N- to C-terminus: Photoreceptor disk component PRCD (54 aa).

The S-palmitoyl cysteine moiety is linked to residue cysteine 2. The interval 24–54 is disordered; sequence QPEPSGADGAVVGSRSERDLQSSGRKEEPLK. The segment covering 38–54 has biased composition (basic and acidic residues); it reads RSERDLQSSGRKEEPLK.

It belongs to the PRCD family. As to quaternary structure, interacts with RHO/rhodopsin; the interaction promotes PRCD stability. Post-translationally, palmitoylated at Cys-2. Palmitoylation is essential for protein stability and trafficking to the photoreceptor outer segment, but does not appear to be essential for membrane localization. Probably palmitoylated by ZDHHC3. Phosphorylated. In terms of tissue distribution, expressed in retina.

It is found in the cell projection. The protein resides in the cilium. Its subcellular location is the photoreceptor outer segment. It localises to the membrane. The protein localises to the endoplasmic reticulum. It is found in the golgi apparatus. In terms of biological role, involved in vision. This chain is Photoreceptor disk component PRCD, found in Canis lupus familiaris (Dog).